Here is a 284-residue protein sequence, read N- to C-terminus: 4-diphosphocytidyl-2-C-methyl-D-erythritol kinase (284 aa).

K14 is an active-site residue. Position 98-108 (98-108 (PMGGGLGGGSS)) interacts with ATP. Residue D140 is part of the active site.

The protein belongs to the GHMP kinase family. IspE subfamily.

The catalysed reaction is 4-CDP-2-C-methyl-D-erythritol + ATP = 4-CDP-2-C-methyl-D-erythritol 2-phosphate + ADP + H(+). It participates in isoprenoid biosynthesis; isopentenyl diphosphate biosynthesis via DXP pathway; isopentenyl diphosphate from 1-deoxy-D-xylulose 5-phosphate: step 3/6. In terms of biological role, catalyzes the phosphorylation of the position 2 hydroxy group of 4-diphosphocytidyl-2C-methyl-D-erythritol. The protein is 4-diphosphocytidyl-2-C-methyl-D-erythritol kinase of Shewanella putrefaciens (strain CN-32 / ATCC BAA-453).